The following is a 166-amino-acid chain: NAD(P)H-quinone oxidoreductase subunit I, chloroplastic (166 aa).

2 4Fe-4S ferredoxin-type domains span residues 55 to 84 and 95 to 124; these read GRIH…VDWK and LNYS…MTEE. [4Fe-4S] cluster-binding residues include cysteine 64, cysteine 67, cysteine 70, cysteine 74, cysteine 104, cysteine 107, cysteine 110, and cysteine 114.

This sequence belongs to the complex I 23 kDa subunit family. In terms of assembly, NDH is composed of at least 16 different subunits, 5 of which are encoded in the nucleus. It depends on [4Fe-4S] cluster as a cofactor.

It localises to the plastid. It is found in the chloroplast thylakoid membrane. The catalysed reaction is a plastoquinone + NADH + (n+1) H(+)(in) = a plastoquinol + NAD(+) + n H(+)(out). It carries out the reaction a plastoquinone + NADPH + (n+1) H(+)(in) = a plastoquinol + NADP(+) + n H(+)(out). In terms of biological role, NDH shuttles electrons from NAD(P)H:plastoquinone, via FMN and iron-sulfur (Fe-S) centers, to quinones in the photosynthetic chain and possibly in a chloroplast respiratory chain. The immediate electron acceptor for the enzyme in this species is believed to be plastoquinone. Couples the redox reaction to proton translocation, and thus conserves the redox energy in a proton gradient. The polypeptide is NAD(P)H-quinone oxidoreductase subunit I, chloroplastic (Steiractinia sodiroi).